The primary structure comprises 471 residues: UDP-N-acetylmuramate--L-alanine ligase (471 aa).

Position 112–118 (112–118 (GTHGKTT)) interacts with ATP.

This sequence belongs to the MurCDEF family.

Its subcellular location is the cytoplasm. The enzyme catalyses UDP-N-acetyl-alpha-D-muramate + L-alanine + ATP = UDP-N-acetyl-alpha-D-muramoyl-L-alanine + ADP + phosphate + H(+). The protein operates within cell wall biogenesis; peptidoglycan biosynthesis. Functionally, cell wall formation. The polypeptide is UDP-N-acetylmuramate--L-alanine ligase (Aromatoleum aromaticum (strain DSM 19018 / LMG 30748 / EbN1) (Azoarcus sp. (strain EbN1))).